The chain runs to 287 residues: uncharacterized protein (287 aa).

It belongs to the A.longa ORF167/ORF288 family.

The protein resides in the plastid. This is an uncharacterized protein from Euglena longa (Euglenophycean alga).